Here is an 81-residue protein sequence, read N- to C-terminus: Neuronatin (81 aa).

This sequence belongs to the neuronatin family.

May participate in the maintenance of segment identity in the hindbrain and pituitary development, and maturation or maintenance of the overall structure of the nervous system. May function as a regulatory subunit of ion channels. The protein is Neuronatin (NNAT) of Homo sapiens (Human).